Consider the following 248-residue polypeptide: Transcription termination/antitermination protein NusG (248 aa).

The KOW domain maps to 197–227; that stretch reads KGDQVRVIEGPFMNFTGTVEEVHPEKRKLTV.

Belongs to the NusG family. As to quaternary structure, monomer. Homodimer.

In terms of biological role, participates in transcription elongation, termination and antitermination. This chain is Transcription termination/antitermination protein NusG, found in Aquifex aeolicus (strain VF5).